Reading from the N-terminus, the 469-residue chain is Argininosuccinate lyase (469 aa).

The protein belongs to the lyase 1 family. Argininosuccinate lyase subfamily.

The protein localises to the cytoplasm. The enzyme catalyses 2-(N(omega)-L-arginino)succinate = fumarate + L-arginine. The protein operates within amino-acid biosynthesis; L-arginine biosynthesis; L-arginine from L-ornithine and carbamoyl phosphate: step 3/3. The protein is Argininosuccinate lyase of Burkholderia vietnamiensis (strain G4 / LMG 22486) (Burkholderia cepacia (strain R1808)).